We begin with the raw amino-acid sequence, 391 residues long: E3 ubiquitin-protein ligase RMND5A (391 aa).

A LisH domain is found at 114-146; that stretch reads SQQILSEVMVEHFFRQGMLDVAEELCQEAGLSI. The CTLH domain occupies 153-210; it reads PFVELNRILEALKVRVLRPALEWAVSNREMLMAQNSSLEFKLHRLYFISLLMGGTVNQ. The RING-Gid-type zinc-finger motif lies at 336-377; it reads CPILRQQTTDNNPPMKLVCGHIISRDALNKMFNGSKLKCPYC.

In terms of assembly, identified in the CTLH complex that contains at least RANBP9, MKLN1, MAEA, RMND5A, GID8 and ARMC8.

It localises to the nucleus. It is found in the nucleoplasm. Its subcellular location is the cytoplasm. It catalyses the reaction S-ubiquitinyl-[E2 ubiquitin-conjugating enzyme]-L-cysteine + [acceptor protein]-L-lysine = [E2 ubiquitin-conjugating enzyme]-L-cysteine + N(6)-ubiquitinyl-[acceptor protein]-L-lysine.. In terms of biological role, E3 ubiquitin-protein ligase component of the CTLH complex. In Xenopus tropicalis (Western clawed frog), this protein is E3 ubiquitin-protein ligase RMND5A (rmnd5a).